The sequence spans 290 residues: Appressorium protein ROW2 (290 aa).

The signal sequence occupies residues 1–19 (MFTKSVFIALVAGVLGVTA). Positions 266–290 (AIKTPSKRSVMATHVKRSPEWEEEP) are disordered.

Its subcellular location is the secreted. It localises to the nucleus. Functionally, plays a role in the formation of the appressorium, a specialized infection structure with the purpose of penetrating the host surface, and is required for proper remodeling of the appressorium wall and vesicle secretion. This chain is Appressorium protein ROW2, found in Mycosarcoma maydis (Corn smut fungus).